The primary structure comprises 428 residues: MTMTTTISHLPTELLDEIISRVPLKSTRAVRLTCKNWDSLFKNRSFMKEEAAAKEGESRMIVLMDKNLFAMSIFFNGIDIDPSAEQRGKLTCLYDDSEQVKISQVFHCEGLLLCVLEDDKCSLVVWNPYWGQTRWIEPRYFSRIQNCYGRYMYVYALGYNNKSRSHKILRFIDGAFDFPFWYEIYDFDSDLWTTLDVTPQWFINFPPRGCYNRGVTLKGNTYWCAIRRKSNTNWFVDLDHIICFDFTSERFGPLMPLPFVRYTSGSLVTLSCVREEKLAVLFCNNATVEVWITTKIETDKISWSKFLTVNMYVDLLEGSFFIDEVKKVAMIFDIPMNRETVYIVGEAGNVKELHLGQPVDVDKHFSPLFVCSYVPSLVQIKQPPGCQRKQESSLEKRRCDDENISRLIAHEETYVVYGRYVPSRKKPR.

An F-box domain is found at 4–50; sequence TTTISHLPTELLDEIISRVPLKSTRAVRLTCKNWDSLFKNRSFMKEE.

The protein is Putative F-box protein At3g22421 of Arabidopsis thaliana (Mouse-ear cress).